Reading from the N-terminus, the 198-residue chain is Recombination protein RecR (198 aa).

Residues 56 to 71 (CTECRDFSETKICAIC) form a C4-type zinc finger. One can recognise a Toprim domain in the interval 79–174 (HQLCVVESPP…RPSRLAQGLP (96 aa)).

It belongs to the RecR family.

May play a role in DNA repair. It seems to be involved in an RecBC-independent recombinational process of DNA repair. It may act with RecF and RecO. In Xylella fastidiosa (strain 9a5c), this protein is Recombination protein RecR.